The sequence spans 472 residues: Mixed lineage kinase domain-like protein (472 aa).

The segment at 1–143 is N-terminal bundle and brace (NBB); mediates INSP6 binding; sequence MDKLGQIIKL…QEDRQDAEED (143 aa). Residues 61–81 are a coiled coil; that stretch reads LGRFDEVLKEANQQIEKFSKK. At serine 124 the chain carries Phosphoserine. Residues 138 to 229 are a coiled coil; that stretch reads QDAEEDGNEN…VFNNPQAESV (92 aa). The region spanning 192 to 456 is the Protein kinase domain; sequence GPPWTKLKTS…DGRSLSGRER (265 aa). ATP is bound by residues 198-206 and lysine 219; that span reads LKTSKMSTI. Residues serine 345 and serine 347 each carry the phosphoserine; by RIPK3 modification. Threonine 349 is subject to Phosphothreonine; by RIPK3. Serine 352 is modified (phosphoserine; by RIPK3).

It belongs to the protein kinase superfamily. Homooligomer. Homotrimer; forms homotrimers on necroptosis induction. Upon TNF-induced necrosis, forms in complex with PGAM5, RIPK1 and RIPK3. Within this complex, may play a role in the proper targeting of RIPK1-RIPK3 to its downstream effector PGAM5. Interacts with RIPK3; the interaction is direct and promotes its phosphorylation and subsequent activation. In terms of processing, phosphorylation by RIPK3 induces a conformational switch that is required for necroptosis. It also induces homotrimerization and localization to the plasma membrane. In terms of tissue distribution, highly expressed in thymus, colon, intestine, liver, spleen and lung. Expressed at much lower level in skeletal muscle, heart and kidney. Not detected in brain.

It localises to the cytoplasm. It is found in the cell membrane. The protein localises to the nucleus. With respect to regulation, activated via binding to highly phosphorylated inositol phosphates such as inositolhexakisphosphate (InsP6) which mediates the release of an N-terminal auto-inhibitory region. Activation requires not only RIPK3-dependent phosphorylation but also binding to highly phosphorylated inositol phosphates. Pseudokinase that plays a key role in TNF-induced necroptosis, a programmed cell death process. Does not have protein kinase activity. Activated following phosphorylation by RIPK3, leading to homotrimerization, localization to the plasma membrane and execution of programmed necrosis characterized by calcium influx and plasma membrane damage. In addition to TNF-induced necroptosis, necroptosis can also take place in the nucleus in response to orthomyxoviruses infection: following ZBP1 activation, which senses double-stranded Z-RNA structures, nuclear RIPK3 catalyzes phosphorylation and activation of MLKL, promoting disruption of the nuclear envelope and leakage of cellular DNA into the cytosol. Binds to highly phosphorylated inositol phosphates such as inositolhexakisphosphate (InsP6) which is essential for its necroptotic function. This chain is Mixed lineage kinase domain-like protein, found in Mus musculus (Mouse).